A 417-amino-acid polypeptide reads, in one-letter code: Lactose permease (417 aa).

At Met1 the chain carries N-formylmethionine; partial. The Cytoplasmic segment spans residues 1–7 (MYYLKNT). A helical transmembrane segment spans residues 8–34 (NFWMFGLFFFFYFFIMGAYFPFFPIWL). Topologically, residues 35–41 (HDINHIS) are periplasmic. Residues 42-70 (KSDTGIIFAAISLFSLLFQPLFGLLSDKL) traverse the membrane as a helical segment. The Cytoplasmic portion of the chain corresponds to 71–74 (GLRK). A helical membrane pass occupies residues 75–100 (YLLWIITGMLVMFAPFFIFIFGPLLQ). Residues 101 to 104 (YNIL) lie on the Periplasmic side of the membrane. A helical membrane pass occupies residues 105–129 (VGSIVGGIYLGFCFNAGAPAVEAFI). The Cytoplasmic segment spans residues 130–140 (EKVSRRSNFEF). A helical membrane pass occupies residues 141-163 (GRARMFGCVGWALCASIVGIMFT). Residues 164-166 (INN) are Periplasmic-facing. Residues 167–186 (QFVFWLGSGCALILAVLLFF) form a helical membrane-spanning segment. Residues 187 to 220 (AKTDAPSSATVANAVGANHSAFSLKLALELFRQP) lie on the Cytoplasmic side of the membrane. A helical membrane pass occupies residues 221-249 (KLWFLSLYVIGVSCTYDVFDQQFANFFTS). Over 250 to 253 (FFAT) the chain is Periplasmic. A helical transmembrane segment spans residues 254 to 278 (GEQGTRVFGYVTTMGELLNASIMFF). Residues 279-288 (APLIINRIGG) are Cytoplasmic-facing. The helical transmembrane segment at 289-308 (KNALLLAGTIMSVRIIGSSF) threads the bilayer. Topologically, residues 309–311 (ATS) are periplasmic. Residues 312 to 334 (ALEVVILKTLHMFEVPFLLVGCF) traverse the membrane as a helical segment. The Cytoplasmic segment spans residues 335–346 (KYITSQFEVRFS). A helical transmembrane segment spans residues 347–374 (ATIYLVCFCFFKQLAMIFMSVLAGNMYE). At 375–377 (SIG) the chain is on the periplasmic side. The helical transmembrane segment at 378 to 398 (FQGAYLVLGLVALGFTLISVF) threads the bilayer. Residues 399-417 (TLSGPGPLSLLRRQVNEVA) are Cytoplasmic-facing.

Monomer.

The protein localises to the cell inner membrane. It catalyses the reaction lactose(in) + H(+)(in) = lactose(out) + H(+)(out). It carries out the reaction melibiose(in) + H(+)(in) = melibiose(out) + H(+)(out). Its activity is regulated as follows. Inhibited by the proton ionophore carbonyl cyanide m-chlorophenylhydrazone (CCCP). Functionally, responsible for transport of beta-galactosides into the cell, with the concomitant import of a proton (symport system). Can transport lactose, melibiose, the synthetic disaccharide lactulose or the analog methyl-1-thio-beta,D-galactopyranoside (TMG), but not sucrose or fructose. The substrate specificity is directed toward the galactopyranosyl moiety of the substrate. The protein is Lactose permease of Escherichia coli (strain K12).